The primary structure comprises 1843 residues: Zinc finger protein 142 (1843 aa).

2 consecutive C2H2-type zinc fingers follow at residues 103-127 (YFCE…TETH) and 164-186 (LPCP…FKIH). Residues 294–357 (PAAKLPPGHR…LEGHVGSGTE (64 aa)) are disordered. The segment covering 318–329 (SAEEEDAEEEES) has biased composition (acidic residues). Basic and acidic residues predominate over residues 330 to 340 (VTQKDSQKVMD). S354 carries the phosphoserine modification. The segment at 363-385 (HMCPECKRCFKKRTHLVEHLHLH) adopts a C2H2-type 3 zinc-finger fold. The C2H2-type 4; degenerate zinc finger occupies 391-413 (LQCPNCQKFFTSKSKLKTHLLRE). 7 C2H2-type zinc fingers span residues 453 to 475 (YACP…LKSH), 543 to 566 (FHCP…KQGH), 601 to 623 (HQCS…MLLH), 629 to 651 (HKCE…MLTH), 657 to 679 (YMCT…MRKH), 685 to 707 (YQCN…KLRH), and 744 to 767 (YPCR…NCKH). Residue K794 forms a Glycyl lysine isopeptide (Lys-Gly) (interchain with G-Cter in SUMO2) linkage. Disordered stretches follow at residues 819–888 (QCLA…LGEV) and 1103–1177 (PKPV…TGTS). Positions 837 to 846 (PEREDREHEI) are enriched in basic and acidic residues. The segment covering 1157–1167 (LPTPSDFPTSP) has biased composition (pro residues). Polar residues predominate over residues 1168–1177 (PENSLPTGTS). C2H2-type zinc fingers lie at residues 1331–1354 (LQCG…RLKH), 1388–1411 (IPCS…LRVH), 1446–1469 (FSCT…LRRH), 1514–1537 (LECG…RQHH), 1608–1630 (YKCT…SRIH), 1636–1658 (YHCH…MRIH), 1664–1686 (YLCP…MTKH), 1692–1715 (YQCP…ETRH), and 1721–1743 (FMCE…LRKH). Residues K1353 and K1402 each participate in a glycyl lysine isopeptide (Lys-Gly) (interchain with G-Cter in SUMO2) cross-link. A Glycyl lysine isopeptide (Lys-Gly) (interchain with G-Cter in SUMO2) cross-link involves residue K1747. A C2H2-type 21 zinc finger spans residues 1749–1771 (YVCNVCHRAFRWAAGLRHHALTH). The interval 1795–1843 (HVRRHHPDQADPNQGVGKDPTTPTVHLHDVKLEDPSPPAPPAPSTGPEG) is disordered. The segment covering 1829–1843 (PSPPAPPAPSTGPEG) has biased composition (pro residues).

Belongs to the krueppel C2H2-type zinc-finger protein family.

It localises to the nucleus. Its function is as follows. May be involved in transcriptional regulation. In Mus musculus (Mouse), this protein is Zinc finger protein 142.